Consider the following 269-residue polypeptide: Dihydropteroate synthase (269 aa).

Positions 14–261 (TYIMGILNFT…DVLENSRAAK (248 aa)) constitute a Pterin-binding domain. A Mg(2+)-binding site is contributed by N21. (7,8-dihydropterin-6-yl)methyl diphosphate-binding positions include T61, D95, N114, D178, K214, and 249-251 (RVH).

It belongs to the DHPS family. Mg(2+) serves as cofactor.

It carries out the reaction (7,8-dihydropterin-6-yl)methyl diphosphate + 4-aminobenzoate = 7,8-dihydropteroate + diphosphate. It participates in cofactor biosynthesis; tetrahydrofolate biosynthesis; 7,8-dihydrofolate from 2-amino-4-hydroxy-6-hydroxymethyl-7,8-dihydropteridine diphosphate and 4-aminobenzoate: step 1/2. Its function is as follows. Catalyzes the condensation of para-aminobenzoate (pABA) with 6-hydroxymethyl-7,8-dihydropterin diphosphate (DHPt-PP) to form 7,8-dihydropteroate (H2Pte), the immediate precursor of folate derivatives. The protein is Dihydropteroate synthase of Clostridium beijerinckii (strain ATCC 51743 / NCIMB 8052) (Clostridium acetobutylicum).